We begin with the raw amino-acid sequence, 317 residues long: Acetyl-coenzyme A carboxylase carboxyl transferase subunit alpha (317 aa).

The region spanning 37-292 (QISQKLEDTK…EEYILKAFNE (256 aa)) is the CoA carboxyltransferase C-terminal domain.

The protein belongs to the AccA family. Acetyl-CoA carboxylase is a heterohexamer composed of biotin carboxyl carrier protein (AccB), biotin carboxylase (AccC) and two subunits each of ACCase subunit alpha (AccA) and ACCase subunit beta (AccD).

It localises to the cytoplasm. The catalysed reaction is N(6)-carboxybiotinyl-L-lysyl-[protein] + acetyl-CoA = N(6)-biotinyl-L-lysyl-[protein] + malonyl-CoA. The protein operates within lipid metabolism; malonyl-CoA biosynthesis; malonyl-CoA from acetyl-CoA: step 1/1. Functionally, component of the acetyl coenzyme A carboxylase (ACC) complex. First, biotin carboxylase catalyzes the carboxylation of biotin on its carrier protein (BCCP) and then the CO(2) group is transferred by the carboxyltransferase to acetyl-CoA to form malonyl-CoA. The polypeptide is Acetyl-coenzyme A carboxylase carboxyl transferase subunit alpha (Flavobacterium psychrophilum (strain ATCC 49511 / DSM 21280 / CIP 103535 / JIP02/86)).